The primary structure comprises 221 residues: Membrane-bound lytic murein transglycosylase E (221 aa).

Belongs to the transglycosylase Slt family.

It catalyses the reaction Exolytic cleavage of the (1-&gt;4)-beta-glycosidic linkage between N-acetylmuramic acid (MurNAc) and N-acetylglucosamine (GlcNAc) residues in peptidoglycan, from either the reducing or the non-reducing ends of the peptidoglycan chains, with concomitant formation of a 1,6-anhydrobond in the MurNAc residue.. Functionally, murein-degrading enzyme. May play a role in recycling of muropeptides during cell elongation and/or cell division. This Buchnera aphidicola subsp. Acyrthosiphon pisum (strain APS) (Acyrthosiphon pisum symbiotic bacterium) protein is Membrane-bound lytic murein transglycosylase E (mltE).